The chain runs to 310 residues: Alpha/beta hydrolase domain-containing protein 17A (310 aa).

The tract at residues 38-61 (VPEPEPGPGGAGAAPSGPLRTSAA) is disordered. Residues Ser-190, Asp-255, and His-284 each act as charge relay system in the active site. Residue Ser-307 is modified to Phosphoserine.

Belongs to the AB hydrolase superfamily. ABHD17 family. Post-translationally, palmitoylated on cysteine residues located in a cysteine cluster at the N-terminus which promotes membrane localization. Palmitoylation is required for post-synaptic localization and for depalmitoylating activity towards DLG4/PSD95. As to expression, expressed in brain (at protein level). Expressed in hippocampal neurons.

The protein resides in the cell membrane. It localises to the recycling endosome membrane. It is found in the cell projection. The protein localises to the dendritic spine. Its subcellular location is the postsynaptic density membrane. The catalysed reaction is S-hexadecanoyl-L-cysteinyl-[protein] + H2O = L-cysteinyl-[protein] + hexadecanoate + H(+). Hydrolyzes fatty acids from S-acylated cysteine residues in proteins. Has depalmitoylating activity towards NRAS. Has depalmitoylating activity towards DLG4/PSD95. May have depalmitoylating activity towards MAP6. The sequence is that of Alpha/beta hydrolase domain-containing protein 17A from Rattus norvegicus (Rat).